Here is a 190-residue protein sequence, read N- to C-terminus: Photosynthetic NDH subunit of lumenal location 2, chloroplastic (190 aa).

A chloroplast-targeting transit peptide spans 1–31 (MSSFTTTNTPPPYLLRKIYHRRVNQPFSVVC). The transit peptide at 32–68 (CTGEPQQDIFTRRRTLTSLITFTVIGGATSSALAQEK) directs the protein to the thylakoid. Coiled-coil stretches lie at residues 87-107 (EDAAARIKQTAEGLRDMREML) and 139-159 (ESRRNDYVQAANELVENMSEL).

It belongs to the PsbQ family. As to quaternary structure, part of the chloroplast NDH complex, composed of a mixture of chloroplast and nucleus encoded subunits. Component of the NDH lumenal subcomplex, at least composed of PnsL1, PnsL2, PnsL3, PnsL4 and PnsL5.

It localises to the plastid. It is found in the chloroplast thylakoid membrane. In terms of biological role, NDH shuttles electrons from NAD(P)H:plastoquinone, via FMN and iron-sulfur (Fe-S) centers, to quinones in the photosynthetic chain and possibly in a chloroplast respiratory chain. The immediate electron acceptor for the enzyme in this species is believed to be plastoquinone. Couples the redox reaction to proton translocation, and thus conserves the redox energy in a proton gradient. Required for both formation and activity of the chloroplast NAD(P)H dehydrogenase (NDH) complex. This is Photosynthetic NDH subunit of lumenal location 2, chloroplastic from Arabidopsis thaliana (Mouse-ear cress).